The sequence spans 252 residues: Vacuolar iron transporter 1 (252 aa).

Over 1–38 (MAAATDGGGLPLLADKAASHSHHHHPERHFTSGEVVRD) the chain is Cytoplasmic. A helical transmembrane segment spans residues 39–59 (VIMGVSDGLTVPFALAAGLSG). The Vacuolar portion of the chain corresponds to 60–65 (ASAPSS). A helical transmembrane segment spans residues 66-86 (LVLTAGLAEVAAGAISMGLGG). Over 87 to 170 (YLAAKSEADH…PDPKRAIQSA (84 aa)) the chain is Cytoplasmic. The cytoplasmic metal binding domain (MBD) stretch occupies residues 92–167 (SEADHYQREM…LEKPDPKRAI (76 aa)). Fe cation contacts are provided by Glu-104, Glu-107, Glu-115, Glu-118, Met-151, and Glu-155. A helical membrane pass occupies residues 171 to 191 (LTIALSYVIGGLVPLLPYMFI). At 192-196 (STAQN) the chain is on the vacuolar side. A helical membrane pass occupies residues 197-217 (AMLTSVGVTLVALLFFGYIKG). Topologically, residues 218-224 (RFTGNRP) are cytoplasmic. Residues 225 to 245 (FLSAVQTAIIGALASAAAYGM) form a helical membrane-spanning segment. Residues 246-252 (AKAVQTR) lie on the Vacuolar side of the membrane.

Belongs to the CCC1 family. Homodimer. The dimeric interaction is mediated by both the transmembrane domains (TMDs) and the cytoplasmic metal binding domain (MBD). Highly expressed in leaf blades. Expressed in leaf sheaths.

It localises to the vacuole membrane. The catalysed reaction is Fe(2+)(in) = Fe(2+)(out). Its function is as follows. Vacuolar iron transporter involved in the transfer of iron ions from the cytosol to the vacuole for intracellular iron storage. Vacuolar iron storage is required for seed embryo and seedling development. May be involved in the regulation of iron translocation between flag leaves and seeds. Can transport zinc ions from the cytosol to the vacuole. The protein is Vacuolar iron transporter 1 of Oryza sativa subsp. japonica (Rice).